The following is a 276-amino-acid chain: S-adenosylmethionine-dependent nucleotide dehydratase (276 aa).

The 211-residue stretch at 6–216 folds into the Radical SAM core domain; sequence TSVRKFRSAN…RRRHEDIGCI (211 aa). Positions 22, 26, and 29 each coordinate [4Fe-4S] cluster.

Belongs to the radical SAM superfamily. Viperin family. [4Fe-4S] cluster is required as a cofactor.

It catalyses the reaction CTP + AH2 + S-adenosyl-L-methionine = 3'-deoxy-3',4'-didehydro-CTP + 5'-deoxyadenosine + L-methionine + A + H2O + H(+). In terms of biological role, expression of pVip50 in E.coli (strain MG1655) confers resistance to phage P1; has no effect against T7. Catalyzes the conversion of cytosine triphosphate (CTP) to 3'-deoxy-3',4'-didehydro-CTP (ddhCTP), probably via a SAM-dependent radical mechanism. The modified nucleotide represses transcription from T7 RNA polymerase-directed genes (possibly by acting as chain terminators), strongly suggesting these nucleotides block viral polymerase transcription. How this protein allows bacteria to resist viruses that do not encode their own RNA polymerase (such as lambda, P1) is unknown. The polypeptide is S-adenosylmethionine-dependent nucleotide dehydratase (Thermoplasmatales archaeon (strain ISO4-H5)).